The primary structure comprises 364 residues: Dihydroorotate dehydrogenase (quinone) (364 aa).

Residues 62 to 66 (AGFDK) and Thr-86 each bind FMN. Lys-66 is a binding site for substrate. Residue 111-115 (NRMGF) coordinates substrate. Residues Asn-142 and Asn-175 each contribute to the FMN site. Asn-175 provides a ligand contact to substrate. Catalysis depends on Ser-178, which acts as the Nucleophile. Asn-180 provides a ligand contact to substrate. Residues Lys-216 and Thr-244 each coordinate FMN. 245 to 246 (NT) contacts substrate. FMN contacts are provided by residues Gly-267, Gly-296, and 317 to 318 (YT).

This sequence belongs to the dihydroorotate dehydrogenase family. Type 2 subfamily. Monomer. FMN is required as a cofactor.

It localises to the cell membrane. The catalysed reaction is (S)-dihydroorotate + a quinone = orotate + a quinol. Its pathway is pyrimidine metabolism; UMP biosynthesis via de novo pathway; orotate from (S)-dihydroorotate (quinone route): step 1/1. Catalyzes the conversion of dihydroorotate to orotate with quinone as electron acceptor. The sequence is that of Dihydroorotate dehydrogenase (quinone) from Anaeromyxobacter sp. (strain K).